Reading from the N-terminus, the 991-residue chain is Receptor-like protein kinase HAIKU2 (991 aa).

A signal peptide spans 1–19 (MLRLLFIVRLLFLMPLASS). Topologically, residues 20-616 (RSNHSEEVEN…KRKHLSKVDM (597 aa)) are extracellular. N-linked (GlcNAc...) asparagine glycosylation is present at Asn22. LRR repeat units follow at residues 66 to 90 (DGNV…RFTD), 99 to 123 (LKLL…LGKC), 125 to 148 (RLRY…SLQL), 150 to 170 (EFLS…SLKD), 171 to 196 (LKRL…ILNL), 197 to 220 (TALQ…IKNL), 221 to 244 (VRLQ…IVQL), 246 to 267 (NLRQ…GFRN), 269 to 291 (TNLR…LRFL), 292 to 314 (KNLV…EFGD), 315 to 339 (FKSL…LGSW), 341 to 363 (AFKY…MCKK), 365 to 387 (VMTH…YAKC), 388 to 411 (KTLI…IWGL), 413 to 435 (NLQF…IGNA), 436 to 459 (KSLG…ISGA), 461 to 482 (SLVS…SFGK), 483 to 508 (LKEL…GLCT), 510 to 531 (LVDL…LGSL), 532 to 554 (KLLN…GLSA), and 555 to 578 (LKLS…LVSG). Asn109, Asn135, Asn155, Asn195, and Asn206 each carry an N-linked (GlcNAc...) asparagine glycan. N-linked (GlcNAc...) asparagine glycosylation is found at Asn267 and Asn278. N-linked (GlcNAc...) asparagine glycosylation is found at Asn397 and Asn427. An N-linked (GlcNAc...) asparagine glycan is attached at Asn495. The N-linked (GlcNAc...) asparagine glycan is linked to Asn538. Residues 617 to 637 (CFIVAAILALFFLFSYVIFKI) traverse the membrane as a helical segment. The Cytoplasmic segment spans residues 638–991 (RRDKLNKTVQ…SANDEITKVV (354 aa)). In terms of domain architecture, Protein kinase spans 671–970 (IKSENIIGRG…SMLEKIEPSY (300 aa)). Residues 677-685 (IGRGGQGNV) and Lys699 contribute to the ATP site. 2 positions are modified to phosphotyrosine: Tyr762 and Tyr801. Asp814 serves as the catalytic Proton acceptor. Phosphotyrosine is present on residues Tyr859 and Tyr866. Thr867 carries the post-translational modification Phosphothreonine. The disordered stretch occupies residues 972-991 (KNSGEASYGESANDEITKVV).

The protein belongs to the protein kinase superfamily. Ser/Thr protein kinase family. Expressed in the endosperm of fertilized ovules.

The protein resides in the membrane. The enzyme catalyses L-seryl-[protein] + ATP = O-phospho-L-seryl-[protein] + ADP + H(+). It catalyses the reaction L-threonyl-[protein] + ATP = O-phospho-L-threonyl-[protein] + ADP + H(+). Modulates the seed size by negatively regulating the cellularization of syncytial endosperm. The protein is Receptor-like protein kinase HAIKU2 (IKU2) of Arabidopsis thaliana (Mouse-ear cress).